Consider the following 307-residue polypeptide: Serine/threonine-protein phosphatase 4 catalytic subunit (307 aa).

Mn(2+) is bound by residues aspartate 54, histidine 56, aspartate 82, and asparagine 114. Histidine 115 (proton donor) is an active-site residue. Positions 164 and 238 each coordinate Mn(2+). Leucine methyl ester is present on leucine 307.

Belongs to the PPP phosphatase family. PP-4 (PP-X) subfamily. In terms of assembly, serine/threonine-protein phosphatase 4 (PP4) occurs in different assemblies of the catalytic and one or more regulatory subunits. Probably part of a PP4 PPP4C-PPP4R2-PPP4R3 complex containing Pp4-19C, PPP4R2r and flfl. Interacts with Ptpa; thereby mediating basal localization of the Miranda (Mira) complex; probably by dephosphorylation of Mira. Mn(2+) serves as cofactor. Reversibly methyl esterified on Leu-307 by leucine carboxyl methyltransferase 1 (LCMT1) and protein phosphatase methylesterase 1 (PPME1). Carboxyl methylation influences the affinity of the catalytic subunit for the different regulatory subunits, thereby modulating the PP2A holoenzyme's substrate specificity, enzyme activity and cellular localization.

It is found in the cytoplasm. The protein resides in the nucleus. Its subcellular location is the cytoskeleton. The protein localises to the microtubule organizing center. It localises to the centrosome. It carries out the reaction O-phospho-L-seryl-[protein] + H2O = L-seryl-[protein] + phosphate. The enzyme catalyses O-phospho-L-threonyl-[protein] + H2O = L-threonyl-[protein] + phosphate. Functionally, protein phosphatase that regulates many processes such as microtubule organization at centrosomes. The probable PP4 complex Pp4-19C-PPP4R2r-flfl (PPP4C-PPP4R2-PPP4R3) is required to prevent caspase-induced cell death (in vitro). The polypeptide is Serine/threonine-protein phosphatase 4 catalytic subunit (Pp4-19C) (Drosophila melanogaster (Fruit fly)).